The following is a 549-amino-acid chain: DNA polymerase lambda (549 aa).

Residues 17–116 (DPDGMFRGVS…ERLPEHKFAI (100 aa)) enclose the BRCT domain. Residues 126 to 197 (KEGGAAGSGV…ASGDSKETIA (72 aa)) are disordered. A compositionally biased stretch (basic and acidic residues) spans 149–175 (PENRKETAGGNRESRDAIAHPNEDSDV). Residues 180–197 (STCTSSQSASGDSKETIA) are compositionally biased toward polar residues. The segment at 233–247 (NIYRALGDDRRSFSY) is DNA-binding. Histidine 280 is an active-site residue. The DNA-binding stretch occupies residues 315–318 (GPAT). Residues arginine 356, 387-390 (SYRR), and 396-399 (GDMD) contribute to the dCTP site. Residues 390-399 (RGKSSCGDMD) form an involved in primer binding region. 3 residues coordinate Mn(2+): aspartate 397, aspartate 399, and aspartate 464. A DNA-binding region spans residues 438–479 (IEGTDCGVDTYFGLCTYPGRELRHRIDLKVYPRNRHAFGLLA). A dCTP-binding site is contributed by asparagine 487.

It belongs to the DNA polymerase type-X family. In terms of assembly, interacts with PCNA. Requires Mn(2+) as cofactor. In terms of tissue distribution, expressed in proliferating tissues. Expressed in roots, root apex, young leaves, shoot apical meristem (SAM), flag leaves and panicles.

It localises to the nucleus. It catalyses the reaction DNA(n) + a 2'-deoxyribonucleoside 5'-triphosphate = DNA(n+1) + diphosphate. In terms of biological role, repair polymerase involved in base excision repair (BER) and responsible for repair of lesions that give rise to abasic (AP) sites in DNA. Has both DNA polymerase and terminal transferase activities. Has a 5'-deoxyribose-5-phosphate lyase (dRP lyase) activity. The chain is DNA polymerase lambda from Oryza sativa subsp. japonica (Rice).